Consider the following 929-residue polypeptide: Probable LRR receptor-like serine/threonine-protein kinase At1g67720 (929 aa).

Positions 1-21 are cleaved as a signal peptide; that stretch reads MGLCLAQLAVTCLFLVPFVLS. Residues 22-531 are Extracellular-facing; the sequence is QVTEFVSIDC…NEAQRKHFWQ (510 aa). 7 N-linked (GlcNAc...) asparagine glycosylation sites follow: Asn-36, Asn-173, Asn-236, Asn-293, Asn-320, Asn-332, and Asn-407. LRR repeat units lie at residues 413–437, 438–460, 461–484, and 485–508; these read PPRV…INYM, EALT…MSKL, VNLK…LAHL, and PNLQ…LLKG. A glycan (N-linked (GlcNAc...) asparagine) is linked at Asn-494. A helical transmembrane segment spans residues 532–552; that stretch reads ILGISIAAVAILLLLVGGSLV. The Cytoplasmic segment spans residues 553-929; it reads LLCALRKTKR…SRNSLAPAAR (377 aa). Residues 606–880 enclose the Protein kinase domain; it reads DNFSKKVGRG…EVIVAIQDAI (275 aa). Residues 612-620 and Lys-634 contribute to the ATP site; that span reads VGRGSFGSV. A Phosphotyrosine modification is found at Tyr-679. Asp-731 functions as the Proton acceptor in the catalytic mechanism. Ser-735 and Ser-764 each carry phosphoserine. Phosphothreonine is present on Thr-770. A Phosphotyrosine modification is found at Tyr-778.

It belongs to the protein kinase superfamily. Ser/Thr protein kinase family.

The protein localises to the membrane. The catalysed reaction is L-seryl-[protein] + ATP = O-phospho-L-seryl-[protein] + ADP + H(+). It catalyses the reaction L-threonyl-[protein] + ATP = O-phospho-L-threonyl-[protein] + ADP + H(+). The protein is Probable LRR receptor-like serine/threonine-protein kinase At1g67720 of Arabidopsis thaliana (Mouse-ear cress).